The following is a 415-amino-acid chain: L-cysteine:1D-myo-inositol 2-amino-2-deoxy-alpha-D-glucopyranoside ligase (415 aa).

C47 is a binding site for Zn(2+). L-cysteinyl-5'-AMP is bound by residues 47-50, T62, and 85-87; these read CGIT and NVT. A 'HIGH' region motif is present at residues 49–59; that stretch reads ITPYDATHLGH. Residues 190 to 195 carry the 'ERGGDP' region motif; the sequence is ERGGDP. W230 lines the L-cysteinyl-5'-AMP pocket. C234 serves as a coordination point for Zn(2+). An L-cysteinyl-5'-AMP-binding site is contributed by 252–254; the sequence is GSD. H259 serves as a coordination point for Zn(2+). I286 is a binding site for L-cysteinyl-5'-AMP. The 'KMSKS' region signature appears at 292-296; the sequence is KMSKS.

This sequence belongs to the class-I aminoacyl-tRNA synthetase family. MshC subfamily. As to quaternary structure, monomer. Zn(2+) is required as a cofactor.

The enzyme catalyses 1D-myo-inositol 2-amino-2-deoxy-alpha-D-glucopyranoside + L-cysteine + ATP = 1D-myo-inositol 2-(L-cysteinylamino)-2-deoxy-alpha-D-glucopyranoside + AMP + diphosphate + H(+). Catalyzes the ATP-dependent condensation of GlcN-Ins and L-cysteine to form L-Cys-GlcN-Ins. The sequence is that of L-cysteine:1D-myo-inositol 2-amino-2-deoxy-alpha-D-glucopyranoside ligase (mshC) from Mycolicibacterium paratuberculosis (strain ATCC BAA-968 / K-10) (Mycobacterium paratuberculosis).